A 781-amino-acid polypeptide reads, in one-letter code: Transcription factor Sp3 (781 aa).

Over residues 1–12 the composition is skewed to basic and acidic residues; sequence MTAPEKPVKQEE. 2 disordered regions span residues 1–53 and 65–88; these read MTAP…AAQD and TCSKIGPPSPGDDEEEAAAAAGAP. The span at 20-31 shows a compositional bias: gly residues; sequence SGGGGGGGGGHG. The span at 32-53 shows a compositional bias: low complexity; it reads EYLQQQQQHGNGAVAAAAAAQD. Serine 73 carries the phosphoserine modification. Residue lysine 120 forms a Glycyl lysine isopeptide (Lys-Gly) (interchain with G-Cter in SUMO) linkage. Residues 138-237 form a transactivation domain (Gln-rich) region; that stretch reads QYVLPLQNLQ…IPQTGQVQVQ (100 aa). The disordered stretch occupies residues 301-338; it reads QAMDSSDNSERTGERVSPDINETNTDTDLFVPTSSSSQ. Residues 308–317 show a composition bias toward basic and acidic residues; that stretch reads NSERTGERVS. Positions 320–338 are enriched in polar residues; it reads INETNTDTDLFVPTSSSSQ. A transactivation domain (Gln-rich) region spans residues 350–499; that stretch reads QQNTNSLTTS…TPVQTLTLGQ (150 aa). A 9aaTAD motif is present at residues 461-469; the sequence is VTWQTFQVQ. A repressor domain region spans residues 534 to 620; it reads IQLHPGENAD…RGTNLGKKKQ (87 aa). Position 551 is an N6-acetyllysine; alternate (lysine 551). Lysine 551 participates in a covalent cross-link: Glycyl lysine isopeptide (Lys-Gly) (interchain with G-Cter in SUMO); alternate. A Glycyl lysine isopeptide (Lys-Gly) (interchain with G-Cter in SUMO1); alternate cross-link involves residue lysine 551. Residue lysine 551 forms a Glycyl lysine isopeptide (Lys-Gly) (interchain with G-Cter in SUMO2); alternate linkage. Serine 563 and serine 566 each carry phosphoserine. Lysine 593 participates in a covalent cross-link: Glycyl lysine isopeptide (Lys-Gly) (interchain with G-Cter in SUMO2). The C2H2-type 1 zinc finger occupies 621 to 645; it reads HICHIPGCGKVYGKTSHLRAHLRWH. Serine 646 carries the post-translational modification Phosphoserine. 2 C2H2-type zinc fingers span residues 651 to 675 and 681 to 703; these read FVCNWMYCGKRFTRSDELQRHRRTH and FVCPECSKRFMRSDHLAKHIKTH.

This sequence belongs to the Sp1 C2H2-type zinc-finger protein family. As to quaternary structure, interacts with HLTF; the interaction may be required for basal transcriptional activity of HLTF. Interacts with HDAC1; the interaction deacetylates SP3 and regulates its transcriptional activity. Interacts with HDAC2 (preferably the CK2-phosphorylated form); the interaction deacetylates SP3 and regulates its transcriptional activity. Interacts with MEIS2 isoform 4 and PBX1 isoform PBX1a. Post-translationally, not glycosylated. In terms of processing, acetylated by histone acetyltransferase p300, deacetylated by HDACs. Acetylation/deacetylation states regulate transcriptional activity. Acetylation appears to activate transcription. Alternate sumoylation and acetylation at Lys-551 also control transcriptional activity. Ceramides can also regulate acetylation/deacetylation events through altering the interaction of HDAC with SP3. In vitro, C(18)-ceramides, but not C(16)-ceramides, increase the interaction of HDAC1 with SP3 and enhance the deacetylation of SP3 and the subsequent repression of the TERT promoter. Sumoylated on all isoforms. Sumoylated on 2 sites in longer isoforms with Lys-551 being the major site. Sumoylation at this site promotes nuclear localization to the nuclear periphery, nuclear dots and PML nuclear bodies. Sumoylation on Lys-551 represses the transactivation activity, except for the largest isoform, L-Sp3, which has little effect on transactivation. Alternate sumoylation and acetylation at Lys-551 also control transcriptional activity. In terms of tissue distribution, ubiquitously expressed.

It is found in the nucleus. It localises to the PML body. Transcriptional factor that can act as an activator or repressor depending on isoform and/or post-translational modifications. Binds to GT and GC boxes promoter elements. Competes with SP1 for the GC-box promoters. Weak activator of transcription but can activate a number of genes involved in different processes such as cell-cycle regulation, hormone-induction and house-keeping. The sequence is that of Transcription factor Sp3 (SP3) from Homo sapiens (Human).